The primary structure comprises 439 residues: Acyl-lipid (8-3)-desaturase (439 aa).

Residues glycine 7–glutamate 88 form the Cytochrome b5 heme-binding domain. Residues histidine 40 and histidine 66 each contribute to the heme site. A helical membrane pass occupies residues isoleucine 123–leucine 143. Positions histidine 171–histidine 175 match the Histidine box-1 motif. The short motif at histidine 208 to alanine 213 is the Histidine box-2 element. 3 helical membrane passes run alanine 254–histidine 274, phenylalanine 287–serine 307, and valine 312–valine 332. The short motif at glutamine 376–histidine 380 is the Histidine box-3 element.

It belongs to the fatty acid desaturase type 1 family. It depends on Fe(2+) as a cofactor.

The protein resides in the membrane. It carries out the reaction an (8Z,11Z,14Z)-icosatrienoyl-containing glycerolipid + 2 Fe(II)-[cytochrome b5] + O2 + 2 H(+) = (5Z,8Z,11Z,14Z)-eicosatetraenoyl-containing glycerolipid + 2 Fe(III)-[cytochrome b5] + 2 H2O. The enzyme catalyses an (8Z,11Z,14Z,17Z)-eicosatetraenoyl-containing glycerolipid + 2 Fe(II)-[cytochrome b5] + O2 + 2 H(+) = a (5Z,8Z,11Z,14Z,17Z)-eicosapentaenoyl-containing glycerolipid + 2 Fe(III)-[cytochrome b5] + 2 H2O. Its function is as follows. Fatty acid desaturase that introduces a cis double bond at the 5-position in 20-carbon polyunsaturated fatty acids incorporated in a glycerolipid that contain a Delta(8) double bond. This Thraustochytrium sp protein is Acyl-lipid (8-3)-desaturase.